The primary structure comprises 254 residues: Methyltransferase-like protein 23 (254 aa).

A disordered region spans residues 1-27 (MKSFIFRQNPRKQQQEQNNLVDYSDSD). The span at 11–21 (RKQQQEQNNLV) shows a compositional bias: polar residues.

This sequence belongs to the methyltransferase superfamily. METTL23 family.

Functionally, probable methyltransferase. The protein is Methyltransferase-like protein 23 of Dictyostelium discoideum (Social amoeba).